Reading from the N-terminus, the 76-residue chain is DNA-binding protein S1FA2 (76 aa).

Positions Pro-50–Lys-55 match the Nuclear localization signal motif. Over residues Pro-51–Lys-66 the composition is skewed to basic residues. The tract at residues Pro-51 to Glu-76 is disordered.

This sequence belongs to the S1FA transcription factor family.

Its subcellular location is the nucleus. DNA-binding protein that specifically recognizes a negative element (S1F) within the RPS1 promoter. The polypeptide is DNA-binding protein S1FA2 (S1FA2) (Arabidopsis thaliana (Mouse-ear cress)).